Reading from the N-terminus, the 150-residue chain is SsrA-binding protein (150 aa).

It belongs to the SmpB family.

It is found in the cytoplasm. Required for rescue of stalled ribosomes mediated by trans-translation. Binds to transfer-messenger RNA (tmRNA), required for stable association of tmRNA with ribosomes. tmRNA and SmpB together mimic tRNA shape, replacing the anticodon stem-loop with SmpB. tmRNA is encoded by the ssrA gene; the 2 termini fold to resemble tRNA(Ala) and it encodes a 'tag peptide', a short internal open reading frame. During trans-translation Ala-aminoacylated tmRNA acts like a tRNA, entering the A-site of stalled ribosomes, displacing the stalled mRNA. The ribosome then switches to translate the ORF on the tmRNA; the nascent peptide is terminated with the 'tag peptide' encoded by the tmRNA and targeted for degradation. The ribosome is freed to recommence translation, which seems to be the essential function of trans-translation. The sequence is that of SsrA-binding protein from Thermotoga maritima (strain ATCC 43589 / DSM 3109 / JCM 10099 / NBRC 100826 / MSB8).